The primary structure comprises 167 residues: Small ribosomal subunit protein uS5 (167 aa).

The region spanning 11-74 (LQEKLIAVNR…EKARRAMINV (64 aa)) is the S5 DRBM domain.

Belongs to the universal ribosomal protein uS5 family. As to quaternary structure, part of the 30S ribosomal subunit. Contacts proteins S4 and S8.

In terms of biological role, with S4 and S12 plays an important role in translational accuracy. Functionally, located at the back of the 30S subunit body where it stabilizes the conformation of the head with respect to the body. This Yersinia pseudotuberculosis serotype O:1b (strain IP 31758) protein is Small ribosomal subunit protein uS5.